We begin with the raw amino-acid sequence, 254 residues long: Ornithine decarboxylase antizyme (254 aa).

It belongs to the ODC antizyme family. As to quaternary structure, interacts with ODC1 and thereby sterically blocks ODC homodimerization.

Functionally, ornithine decarboxylase (ODC) antizyme protein that negatively regulates ODC activity and intracellular polyamine biosynthesis and uptake in response to increased intracellular polyamine levels. Binds to ODC monomers, inhibiting the assembly of the functional ODC homodimer, and targets the monomers for ubiquitin-independent proteolytic destruction by the 26S proteasome. Required for cellular differentiation in neuronal and myogenic lineages during embryonic development. The chain is Ornithine decarboxylase antizyme (Oda) from Drosophila melanogaster (Fruit fly).